The following is a 469-amino-acid chain: Putative dipeptidase SAUSA300_1697 (469 aa).

Histidine 84 lines the Zn(2+) pocket. Aspartate 86 is a catalytic residue. Aspartate 115 serves as a coordination point for Zn(2+). Residue glutamate 149 is the Proton acceptor of the active site. Zn(2+)-binding residues include glutamate 150, aspartate 173, and histidine 440.

Belongs to the peptidase M20A family. Zn(2+) is required as a cofactor.

The polypeptide is Putative dipeptidase SAUSA300_1697 (Staphylococcus aureus (strain USA300)).